Consider the following 154-residue polypeptide: Probable chemoreceptor glutamine deamidase CheD (154 aa).

The protein belongs to the CheD family.

The enzyme catalyses L-glutaminyl-[protein] + H2O = L-glutamyl-[protein] + NH4(+). Probably deamidates glutamine residues to glutamate on methyl-accepting chemotaxis receptors (MCPs), playing an important role in chemotaxis. This Methanococcus maripaludis (strain C6 / ATCC BAA-1332) protein is Probable chemoreceptor glutamine deamidase CheD.